A 148-amino-acid polypeptide reads, in one-letter code: Ribonuclease pancreatic (148 aa).

Residues 1-25 (MGLEKSLMLFPLLVLVLGLVQPSLG) form the signal peptide. Substrate contacts are provided by lysine 32 and arginine 35. Catalysis depends on histidine 37, which acts as the Proton acceptor. Intrachain disulfides connect cysteine 50-cysteine 108, cysteine 64-cysteine 119, cysteine 82-cysteine 134, and cysteine 89-cysteine 96. Substrate-binding positions include 65–69 (KPVNT), lysine 90, and arginine 109. The Proton donor role is filled by histidine 143.

Belongs to the pancreatic ribonuclease family. As to quaternary structure, monomer. Interacts with and forms tight 1:1 complexes with RNH1. Dimerization of two such complexes may occur. Interaction with RNH1 inhibits this protein. In terms of tissue distribution, pancreas.

The protein localises to the secreted. It carries out the reaction an [RNA] containing cytidine + H2O = an [RNA]-3'-cytidine-3'-phosphate + a 5'-hydroxy-ribonucleotide-3'-[RNA].. It catalyses the reaction an [RNA] containing uridine + H2O = an [RNA]-3'-uridine-3'-phosphate + a 5'-hydroxy-ribonucleotide-3'-[RNA].. Its function is as follows. Endonuclease that catalyzes the cleavage of RNA on the 3' side of pyrimidine nucleotides. Acts on single-stranded and double-stranded RNA. The polypeptide is Ribonuclease pancreatic (RNASE1) (Gerbilliscus gambianus (Gambian gerbil)).